A 209-amino-acid chain; its full sequence is Redox-sensing transcriptional repressor Rex (209 aa).

The segment at residues 16–55 (LYYRFIQNLSLSGKQRVSSAELSEAVKVDSATIRRDFSYF) is a DNA-binding region (H-T-H motif). 90 to 95 (GVGNLG) contacts NAD(+).

Belongs to the transcriptional regulatory Rex family. In terms of assembly, homodimer.

The protein resides in the cytoplasm. Its function is as follows. Modulates transcription in response to changes in cellular NADH/NAD(+) redox state. This Bacillus cytotoxicus (strain DSM 22905 / CIP 110041 / 391-98 / NVH 391-98) protein is Redox-sensing transcriptional repressor Rex.